Reading from the N-terminus, the 256-residue chain is GDSL esterase/lipase CPRD49 (256 aa).

The signal sequence occupies residues 1-27 (MVGPARPQIVLFGSSIVQMSFGHGGWG). Serine 15 functions as the Nucleophile in the catalytic mechanism. N-linked (GlcNAc...) asparagine glycans are attached at residues asparagine 49 and asparagine 79. Residue histidine 213 is part of the active site. Residue asparagine 243 is glycosylated (N-linked (GlcNAc...) asparagine).

Belongs to the 'GDSL' lipolytic enzyme family. As to expression, specifically expressed in anthers (stages 8-12).

It localises to the secreted. This Arabidopsis thaliana (Mouse-ear cress) protein is GDSL esterase/lipase CPRD49 (CPRD49).